Consider the following 85-residue polypeptide: Antitoxin VapB31 (85 aa).

Its function is as follows. Antitoxin component of a type II toxin-antitoxin (TA) system. Upon expression in M.smegmatis neutralizes the effect of cognate toxin VapC31. The chain is Antitoxin VapB31 (vapB31) from Mycobacterium tuberculosis (strain ATCC 25618 / H37Rv).